Consider the following 48-residue polypeptide: Phospholipase A2 TI-Nh (48 aa).

Histidine 25 is a catalytic residue. Residue aspartate 26 coordinates Ca(2+).

The protein belongs to the phospholipase A2 family. Group I subfamily. D49 sub-subfamily. Monomer. Ca(2+) serves as cofactor. As to expression, expressed by the venom gland.

Its subcellular location is the secreted. It carries out the reaction a 1,2-diacyl-sn-glycero-3-phosphocholine + H2O = a 1-acyl-sn-glycero-3-phosphocholine + a fatty acid + H(+). Functionally, phospholipase A2 with weak enzymatic activity, which partially inhibits thrombin enzymatic activity (Ki=73 nM), completely inhibits thrombin-induced platelet aggregation and retards fibrin clot formation (IC(50)=0.2 nM). May exert this anticoagulant effect through a non-enzymatic mechanism. This chain is Phospholipase A2 TI-Nh, found in Naja haje haje (Egyptian cobra).